The chain runs to 329 residues: Segregation and condensation protein B (329 aa).

3 disordered regions span residues 1–39 (MTTG…GPAD), 252–274 (IVEK…SDPA), and 286–329 (SEAA…PKPE).

The protein belongs to the ScpB family. Homodimer. Homodimerization may be required to stabilize the binding of ScpA to the Smc head domains. Component of the Structural Maintenance of Chromosome (SMC) condensin-like complex composed of ScpA, ScpB and the Smc homodimer. ScpA and ScpB bind to the head domain of Smc, the presence of the three proteins is required for the association of the complex with DNA.

It localises to the cytoplasm. Its function is as follows. A conditionally essential component of the chromosome segregation machinery. Required for chromosome condensation and partitioning. Important for positioning and anchoring of ParB-parS complexes (ori of replication) in the subpolar region, and of the ter replication site, as well as for segration of the ParB-parS complex and thus chromosome segregation. Probably acts via the formation of a condensin-like complex containing Smc, ScpA and ScpB that pulls DNA away from mid-cell into both cell halves. The chain is Segregation and condensation protein B from Myxococcus xanthus (strain DK1622).